The primary structure comprises 316 residues: Beta-ketoacyl-[acyl-carrier-protein] synthase III (316 aa).

Catalysis depends on residues Cys112 and His243. The segment at 244-248 (QANIR) is ACP-binding. Residue Asn273 is part of the active site.

It belongs to the thiolase-like superfamily. FabH family. As to quaternary structure, homodimer.

Its subcellular location is the cytoplasm. It catalyses the reaction malonyl-[ACP] + acetyl-CoA + H(+) = 3-oxobutanoyl-[ACP] + CO2 + CoA. It functions in the pathway lipid metabolism; fatty acid biosynthesis. In terms of biological role, catalyzes the condensation reaction of fatty acid synthesis by the addition to an acyl acceptor of two carbons from malonyl-ACP. Catalyzes the first condensation reaction which initiates fatty acid synthesis and may therefore play a role in governing the total rate of fatty acid production. Possesses both acetoacetyl-ACP synthase and acetyl transacylase activities. Its substrate specificity determines the biosynthesis of branched-chain and/or straight-chain of fatty acids. The chain is Beta-ketoacyl-[acyl-carrier-protein] synthase III from Actinobacillus pleuropneumoniae serotype 5b (strain L20).